The primary structure comprises 959 residues: Outer capsid protein VP2 (959 aa).

The protein belongs to the orbivirus VP2 family.

It is found in the virion. Its function is as follows. The VP2 protein is one of the two proteins (with VP5) which constitute the virus particle outer capsid. It is the major target of the host immunogenic response. Responsible for viral attachment to target host cell, probably by binding to sialic acid. This attachment induces virion internalization predominantly through clathrin-dependent endocytosis. This chain is Outer capsid protein VP2 (Segment-2), found in Antilocapra americana (Pronghorn).